A 250-amino-acid chain; its full sequence is 3-deoxy-manno-octulosonate cytidylyltransferase (250 aa).

The protein belongs to the KdsB family.

The protein localises to the cytoplasm. The catalysed reaction is 3-deoxy-alpha-D-manno-oct-2-ulosonate + CTP = CMP-3-deoxy-beta-D-manno-octulosonate + diphosphate. It functions in the pathway nucleotide-sugar biosynthesis; CMP-3-deoxy-D-manno-octulosonate biosynthesis; CMP-3-deoxy-D-manno-octulosonate from 3-deoxy-D-manno-octulosonate and CTP: step 1/1. Its pathway is bacterial outer membrane biogenesis; lipopolysaccharide biosynthesis. In terms of biological role, activates KDO (a required 8-carbon sugar) for incorporation into bacterial lipopolysaccharide in Gram-negative bacteria. The polypeptide is 3-deoxy-manno-octulosonate cytidylyltransferase (Yersinia pseudotuberculosis serotype O:1b (strain IP 31758)).